We begin with the raw amino-acid sequence, 219 residues long: Charged multivesicular body protein 5 (219 aa).

Residues Thr22 to Tyr153 are a coiled coil.

It belongs to the SNF7 family. As to quaternary structure, probable peripherally associated component of the endosomal sorting required for transport complex III (ESCRT-III).

It localises to the cytoplasm. Its subcellular location is the cytosol. The protein localises to the endosome membrane. Its function is as follows. Probable peripherally associated component of the endosomal sorting required for transport complex III (ESCRT-III) which is involved in multivesicular bodies (MVBs) formation and sorting of endosomal cargo proteins into MVBs. MVBs contain intraluminal vesicles (ILVs) that are generated by invagination and scission from the limiting membrane of the endosome and mostly are delivered to lysosomes enabling degradation of membrane proteins, such as stimulated growth factor receptors, lysosomal enzymes and lipids. The chain is Charged multivesicular body protein 5 (chmp5) from Xenopus laevis (African clawed frog).